Reading from the N-terminus, the 570-residue chain is FERM domain-containing protein 5 (570 aa).

Residues 17–298 (YSCTVRLLDD…ENQAFYKLEK (282 aa)) enclose the FERM domain. The interaction with ROCK1 stretch occupies residues 308 to 353 (SNLFFKGSRFRYSGRVAKEVMESSAKIKREPPEIHRAGMVPSRSCP). The tract at residues 344–367 (AGMVPSRSCPSITHGPRLSSVPRT) is disordered. The residue at position 375 (Ser375) is a Phosphoserine. Residues 385–407 (DSAHSTPVRSTSHGDTFLPHVRS) form a disordered region. Positions 388-398 (HSTPVRSTSHG) are enriched in polar residues. The helical transmembrane segment at 504–524 (LLLVTMGLLFVLLLLLIILTE) threads the bilayer.

Interacts with CTNND1. Interacts with ITGB5 (via cytoplasmic domain) and ROCK1.

The protein resides in the membrane. It localises to the cell junction. The protein localises to the adherens junction. Its function is as follows. May be involved in regulation of cell migration. May regulate cell-matrix interactions via its interaction with ITGB5 and modifying ITGB5 cytoplasmic tail interactions such as with FERMT2 and TLN1. May regulate ROCK1 kinase activity possibly involved in regulation of actin stress fiber formation. The protein is FERM domain-containing protein 5 (FRMD5) of Homo sapiens (Human).